Reading from the N-terminus, the 225-residue chain is Enolase-phosphatase E1 (225 aa).

It belongs to the HAD-like hydrolase superfamily. MasA/MtnC family. Monomer. Mg(2+) is required as a cofactor.

The catalysed reaction is 5-methylsulfanyl-2,3-dioxopentyl phosphate + H2O = 1,2-dihydroxy-5-(methylsulfanyl)pent-1-en-3-one + phosphate. It participates in amino-acid biosynthesis; L-methionine biosynthesis via salvage pathway; L-methionine from S-methyl-5-thio-alpha-D-ribose 1-phosphate: step 3/6. Its pathway is amino-acid biosynthesis; L-methionine biosynthesis via salvage pathway; L-methionine from S-methyl-5-thio-alpha-D-ribose 1-phosphate: step 4/6. In terms of biological role, bifunctional enzyme that catalyzes the enolization of 2,3-diketo-5-methylthiopentyl-1-phosphate (DK-MTP-1-P) into the intermediate 2-hydroxy-3-keto-5-methylthiopentenyl-1-phosphate (HK-MTPenyl-1-P), which is then dephosphorylated to form the acireductone 1,2-dihydroxy-3-keto-5-methylthiopentene (DHK-MTPene). The protein is Enolase-phosphatase E1 of Shewanella denitrificans (strain OS217 / ATCC BAA-1090 / DSM 15013).